We begin with the raw amino-acid sequence, 171 residues long: Nicotinamide-nucleotide adenylyltransferase (171 aa).

It belongs to the archaeal NMN adenylyltransferase family.

Its subcellular location is the cytoplasm. The catalysed reaction is beta-nicotinamide D-ribonucleotide + ATP + H(+) = diphosphate + NAD(+). Its pathway is cofactor biosynthesis; NAD(+) biosynthesis; NAD(+) from nicotinamide D-ribonucleotide: step 1/1. In Methanococcus maripaludis (strain C6 / ATCC BAA-1332), this protein is Nicotinamide-nucleotide adenylyltransferase.